Reading from the N-terminus, the 146-residue chain is Hemoglobin subunit beta/beta' (146 aa).

Residues 2–146 form the Globin domain; it reads HWSAEEKQLI…VAHALARKYH (145 aa). The heme b site is built by H63 and H92.

It belongs to the globin family. In terms of assembly, heterotetramer of two alpha chains and two beta chains. In terms of tissue distribution, red blood cells.

Its function is as follows. Involved in oxygen transport from the lung to the various peripheral tissues. The sequence is that of Hemoglobin subunit beta/beta' (HBB) from Chroicocephalus ridibundus (Black-headed gull).